The chain runs to 1944 residues: uncharacterized protein (1944 aa).

Residues 908–999 (SQNLNFLKSK…SESEEESSNG (92 aa)) form a disordered region. Basic and acidic residues-rich tracts occupy residues 916–929 (SKQETTQRIRESAK) and 939–949 (LSEKLNSDNHI). Positions 985-996 (SDEDTSESEEES) are enriched in acidic residues. Position 1293–1300 (1293–1300 (GPPGTGKT)) interacts with ATP. Positions 1824-1944 (QEAHKVKKRH…PPKVEHFKRK (121 aa)) are disordered. Composition is skewed to basic and acidic residues over residues 1843-1852 (GTERDEDIPN) and 1869-1891 (KVTKPRLDESSSSKQDVLNKIDE). Residues 1912–1922 (GHMKKSKKPKS) show a composition bias toward basic residues.

It belongs to the DNA2/NAM7 helicase family.

The protein localises to the nucleus. This is an uncharacterized protein from Schizosaccharomyces pombe (strain 972 / ATCC 24843) (Fission yeast).